Reading from the N-terminus, the 650-residue chain is Protein kinase domain-containing protein ppk38 (650 aa).

Positions 33 to 315 constitute a Protein kinase domain; the sequence is VTVKRYLAEG…MRNVPIHIYD (283 aa). Disordered regions lie at residues 344–442, 517–571, and 591–616; these read IHQS…PTTP, KVAA…PTNM, and RRVSKPEKEHTNPNAEQGDVIPEKPM. 2 stretches are compositionally biased toward polar residues: residues 369 to 415 and 533 to 554; these read NVNS…NFRV and SVENPQNNISAPTPSSLQSSNA.

This chain is Protein kinase domain-containing protein ppk38 (ppk38), found in Schizosaccharomyces pombe (strain 972 / ATCC 24843) (Fission yeast).